Here is a 102-residue protein sequence, read N- to C-terminus: Small ribosomal subunit protein uS10 (102 aa).

It belongs to the universal ribosomal protein uS10 family. Part of the 30S ribosomal subunit.

Involved in the binding of tRNA to the ribosomes. This chain is Small ribosomal subunit protein uS10, found in Rhodospirillum rubrum (strain ATCC 11170 / ATH 1.1.1 / DSM 467 / LMG 4362 / NCIMB 8255 / S1).